The chain runs to 298 residues: ATP synthase gamma chain (298 aa).

Belongs to the ATPase gamma chain family. As to quaternary structure, F-type ATPases have 2 components, CF(1) - the catalytic core - and CF(0) - the membrane proton channel. CF(1) has five subunits: alpha(3), beta(3), gamma(1), delta(1), epsilon(1). CF(0) has three main subunits: a, b and c.

The protein resides in the cell inner membrane. Produces ATP from ADP in the presence of a proton gradient across the membrane. The gamma chain is believed to be important in regulating ATPase activity and the flow of protons through the CF(0) complex. The chain is ATP synthase gamma chain from Francisella tularensis subsp. mediasiatica (strain FSC147).